The following is a 579-amino-acid chain: Nuclear receptor coactivator 5 (579 aa).

An N-acetylmethionine modification is found at Met1. The tract at residues 1 to 77 is disordered; it reads MNTAPSRPSP…DIRDHRDSRS (77 aa). The segment at 1-158 is transcription repression; it reads MNTAPSRPSP…RDSFDGRGPP (158 aa). Phosphothreonine is present on Thr3. Phosphoserine is present on residues Ser9, Ser21, Ser29, Ser34, Ser96, Ser116, Ser126, Ser143, and Ser151. Basic and acidic residues predominate over residues 11–77; the sequence is TRRDPYSFGD…DIRDHRDSRS (67 aa). The tract at residues 148-172 is disordered; that stretch reads YRDSFDGRGPPGPESQSRAKERLKR. Phosphothreonine is present on Thr274. The short motif at 345–349 is the LXXLL motif element; it reads LINLL. Residues Ser378 and Ser381 each carry the phosphoserine modification. Disordered regions lie at residues 378–428 and 446–529; these read SADS…PTSQ and ANSS…RPVS. Low complexity-rich tracts occupy residues 395-420 and 446-460; these read SGSS…ATPT and ANSS…TGSS. The interval 458 to 579 is transcription activation; it reads GSSQNQNFST…APMGSYQRHY (122 aa). The segment covering 461–485 has biased composition (polar residues); it reads QNQNFSTAANSQPQQRPQASGNQPP.

In terms of assembly, binds HTATIP2/TIP30. Interacts with YLPM1. Forms a complex with ILF2, ILF3, YLPM1, KHDRBS1, RBMX and PPP1CA.

Its subcellular location is the nucleus. In terms of biological role, nuclear receptor coregulator that can have both coactivator and corepressor functions. Interacts with nuclear receptors for steroids (ESR1 and ESR2) independently of the steroid binding domain (AF-2) of the ESR receptors, and with the orphan nuclear receptor NR1D2. Involved in the coactivation of nuclear steroid receptors (ER) as well as the corepression of MYC in response to 17-beta-estradiol (E2). The chain is Nuclear receptor coactivator 5 (Ncoa5) from Mus musculus (Mouse).